Here is a 767-residue protein sequence, read N- to C-terminus: Pre-mRNA-splicing factor ATP-dependent RNA helicase PRP43 (767 aa).

The tract at residues 1-74 (MGSKRRFSSE…KLEDGKINPF (74 aa)) is disordered. 2 positions are modified to phosphoserine: serine 8 and serine 9. Over residues 58 to 70 (TSAEEAQKLEDGK) the composition is skewed to basic and acidic residues. The Helicase ATP-binding domain maps to 103–268 (LKLYQNNQIM…FNDAPLLAVP (166 aa)). 116–123 (GETGSGKT) lines the ATP pocket. The short motif at 215 to 218 (DEAH) is the DEAH box element. A Helicase C-terminal domain is found at 293 to 473 (TVLQIHATEE…STVLELKKLG (181 aa)).

The protein belongs to the DEAD box helicase family. DEAH subfamily. DDX15/PRP43 sub-subfamily. In terms of assembly, component of the NTR complex (NTC-related complex), composed of NTR1, NTR2 and PRP43. Interacts with NTR1 and NTR2. Interacts with SPP382.

Its subcellular location is the nucleus. The catalysed reaction is ATP + H2O = ADP + phosphate + H(+). Its function is as follows. Pre-mRNA processing factor involved in disassembly of spliceosomes after the release of mature mRNA. This is Pre-mRNA-splicing factor ATP-dependent RNA helicase PRP43 (PRP43) from Saccharomyces cerevisiae (strain ATCC 204508 / S288c) (Baker's yeast).